We begin with the raw amino-acid sequence, 709 residues long: F-box only protein 40 (709 aa).

The segment at 53–112 (EHQLLCPLEQVPCLNSEYGCPLSMSRHKLAKHLQVCPASVVCCSMEWNRWPNVDSETTLH) adopts a TRAF-type zinc-finger fold. The interval 232–280 (TNSSASCESKNKNDSEKEQISSGHNMVEGEGAPKKKEPQENQKQQDVRT) is disordered. 2 stretches are compositionally biased toward basic and acidic residues: residues 240 to 250 (SKNKNDSEKEQ) and 262 to 277 (GAPK…KQQD). The F-box domain maps to 570-624 (QNSLTSLPLEILKYIAGFLDSVSLAQLSQVSVLMRNICATLLQERGMVLLQWKKK).

In terms of assembly, directly interacts with SKP1 and CUL1. In terms of tissue distribution, expressed only in heart and skeletal muscle.

Its subcellular location is the cytoplasm. Its function is as follows. Probable substrate-recognition component of the SCF (SKP1-CUL1-F-box protein)-type E3 ubiquitin ligase complex that may function in myogenesis. This Homo sapiens (Human) protein is F-box only protein 40 (FBXO40).